We begin with the raw amino-acid sequence, 558 residues long: Alkaline/neutral invertase CINV2 (558 aa).

A phosphoserine mark is found at S16, S19, and S50. Position 79 is a phosphothreonine (T79). S555 is modified (phosphoserine).

The protein belongs to the glycosyl hydrolase 100 family.

It is found in the cytoplasm. It localises to the cytosol. It catalyses the reaction Hydrolysis of terminal non-reducing beta-D-fructofuranoside residues in beta-D-fructofuranosides.. Cytosolic invertase that may cleave sucrose into glucose and fructose, and that is involved in the regulation of root growth. May regulate sugar-mediated root development by controlling sucrose catabolism in root cells. This is Alkaline/neutral invertase CINV2 from Arabidopsis thaliana (Mouse-ear cress).